We begin with the raw amino-acid sequence, 575 residues long: Interleukin-10 receptor subunit alpha (575 aa).

Positions 1-16 (MLSRLLPFLVTISSLS) are cleaved as a signal peptide. Topologically, residues 17 to 241 (LEFIAYGTEL…QYFTVTNLSI (225 aa)) are extracellular. Asn-50, Asn-66, Asn-113, and Asn-182 each carry an N-linked (GlcNAc...) asparagine glycan. Cysteines 204 and 225 form a disulfide. An N-linked (GlcNAc...) asparagine glycan is attached at Asn-238. Residues 242–262 (LVISMLLFCGILVCLVLQWYI) traverse the membrane as a helical segment. At 263-575 (RHPGKLPTVL…PLISSLQVEE (313 aa)) the chain is on the cytoplasmic side. Phosphotyrosine is present on residues Tyr-443 and Tyr-493.

The protein belongs to the type II cytokine receptor family. As to quaternary structure, interacts with IL10. Interacts with IL10RB. Interacts (via its cytoplasmic domain) with JAK1 (via N-terminus). Interacts with BTRC; this interaction leads to IL10RA ubiquitination and subsequent degradation. Interacts with STAT3. Phosphorylated. Phosphorylation of the cytoplasmic tail induced STAT3 activation. Post-translationally, ubiquitinated by BTRC; ubiquitination leads to endocytosis and subsequent degradation of IL10RA.

The protein localises to the cell membrane. It is found in the cytoplasm. Its function is as follows. Cell surface receptor for the cytokine IL10 that participates in IL10-mediated anti-inflammatory functions, limiting excessive tissue disruption caused by inflammation. Upon binding to IL10, induces a conformational change in IL10RB, allowing IL10RB to bind IL10 as well. In turn, the heterotetrameric assembly complex, composed of two subunits of IL10RA and IL10RB, activates the kinases JAK1 and TYK2 that are constitutively associated with IL10RA and IL10RB respectively. These kinases then phosphorylate specific tyrosine residues in the intracellular domain in IL10RA leading to the recruitment and subsequent phosphorylation of STAT3. Once phosphorylated, STAT3 homodimerizes, translocates to the nucleus and activates the expression of anti-inflammatory genes. In addition, IL10RA-mediated activation of STAT3 inhibits starvation-induced autophagy. The sequence is that of Interleukin-10 receptor subunit alpha (Il10ra) from Mus musculus (Mouse).